Consider the following 100-residue polypeptide: Sweet protein mabinlin-4 (100 aa).

4 disulfide bridges follow: cysteine 4/cysteine 49, cysteine 17/cysteine 38, cysteine 39/cysteine 87, and cysteine 51/cysteine 95.

The protein belongs to the 2S seed storage albumins family. As to quaternary structure, heterodimer of a small A and a large B chain linked by disulfide bonds.

Heat stable 2S seed storage protein having sweetness-inducing activity. This Capparis masaikai (Mabinlang) protein is Sweet protein mabinlin-4.